The following is a 399-amino-acid chain: Chorismate synthase (399 aa).

Residues Arg40 and Arg46 each contribute to the NADP(+) site. Residues 134-136 (RAS), 255-256 (QA), Gly299, 314-318 (KPIST), and Arg340 contribute to the FMN site.

It belongs to the chorismate synthase family. In terms of assembly, homotetramer. It depends on FMNH2 as a cofactor.

It carries out the reaction 5-O-(1-carboxyvinyl)-3-phosphoshikimate = chorismate + phosphate. It participates in metabolic intermediate biosynthesis; chorismate biosynthesis; chorismate from D-erythrose 4-phosphate and phosphoenolpyruvate: step 7/7. Functionally, catalyzes the anti-1,4-elimination of the C-3 phosphate and the C-6 proR hydrogen from 5-enolpyruvylshikimate-3-phosphate (EPSP) to yield chorismate, which is the branch point compound that serves as the starting substrate for the three terminal pathways of aromatic amino acid biosynthesis. This reaction introduces a second double bond into the aromatic ring system. The chain is Chorismate synthase from Mycolicibacterium smegmatis (strain ATCC 700084 / mc(2)155) (Mycobacterium smegmatis).